The sequence spans 283 residues: NAD kinase (283 aa).

The active-site Proton acceptor is aspartate 68. NAD(+)-binding positions include 68–69, 142–143, arginine 153, aspartate 172, 183–188, and glutamine 242; these read DG, ND, and TAYSLS.

Belongs to the NAD kinase family. Requires a divalent metal cation as cofactor.

It localises to the cytoplasm. The catalysed reaction is NAD(+) + ATP = ADP + NADP(+) + H(+). In terms of biological role, involved in the regulation of the intracellular balance of NAD and NADP, and is a key enzyme in the biosynthesis of NADP. Catalyzes specifically the phosphorylation on 2'-hydroxyl of the adenosine moiety of NAD to yield NADP. The sequence is that of NAD kinase from Thermoanaerobacter pseudethanolicus (strain ATCC 33223 / 39E) (Clostridium thermohydrosulfuricum).